A 286-amino-acid polypeptide reads, in one-letter code: KH domain-containing protein At2g38610 (286 aa).

Serine 2 is modified (N-acetylserine). The region spanning 141–208 (EIPVDNYPNF…EHLNEQLHIL (68 aa)) is the KH domain. The disordered stretch occupies residues 256–286 (SNNLREESPGPSGGGSVSPFNSSGKRPKTGC). A phosphoserine mark is found at serine 263 and serine 273.

The protein resides in the nucleus. In Arabidopsis thaliana (Mouse-ear cress), this protein is KH domain-containing protein At2g38610.